The following is a 440-amino-acid chain: O-glycoside alpha-1,2-mannosyltransferase homolog 4 (440 aa).

Residues Met-1–Phe-35 are Cytoplasmic-facing. A helical; Signal-anchor for type II membrane protein transmembrane segment spans residues Val-36–Ile-56. Topologically, residues Tyr-57–Glu-440 are lumenal. Glu-336 serves as the catalytic Nucleophile.

It belongs to the glycosyltransferase 15 family.

The protein resides in the cytoplasm. The protein localises to the nucleus. Its subcellular location is the golgi apparatus membrane. Its function is as follows. Probable mannosyltransferase involved in O-glycosylation of cell wall and secreted proteins. Transfers an alpha-D-mannosyl residue from GDP-mannose into lipid-linked oligosaccharide, forming an alpha-(1-&gt;2)-D-mannosyl-D-mannose linkage. This is O-glycoside alpha-1,2-mannosyltransferase homolog 4 (omh4) from Schizosaccharomyces pombe (strain 972 / ATCC 24843) (Fission yeast).